Reading from the N-terminus, the 61-residue chain is Putative antitoxin VapB21 (61 aa).

This sequence belongs to the UPF0165 family.

Its function is as follows. Possibly the antitoxin component of a type II toxin-antitoxin (TA) system. Its cognate toxin is VapC21 (Potential). This Archaeoglobus fulgidus (strain ATCC 49558 / DSM 4304 / JCM 9628 / NBRC 100126 / VC-16) protein is Putative antitoxin VapB21 (vapB21).